Reading from the N-terminus, the 99-residue chain is NADH-quinone oxidoreductase subunit K (99 aa).

A run of 3 helical transmembrane segments spans residues 3–23, 28–48, and 59–79; these read PDNY…GVLL, IVMF…FVTF, and VVAF…LAII.

The protein belongs to the complex I subunit 4L family. As to quaternary structure, NDH-1 is composed of 14 different subunits. Subunits NuoA, H, J, K, L, M, N constitute the membrane sector of the complex.

It is found in the cell membrane. The enzyme catalyses a quinone + NADH + 5 H(+)(in) = a quinol + NAD(+) + 4 H(+)(out). Its function is as follows. NDH-1 shuttles electrons from NADH, via FMN and iron-sulfur (Fe-S) centers, to quinones in the respiratory chain. The immediate electron acceptor for the enzyme in this species is believed to be a menaquinone. Couples the redox reaction to proton translocation (for every two electrons transferred, four hydrogen ions are translocated across the cytoplasmic membrane), and thus conserves the redox energy in a proton gradient. The chain is NADH-quinone oxidoreductase subunit K from Mycolicibacterium gilvum (strain PYR-GCK) (Mycobacterium gilvum (strain PYR-GCK)).